We begin with the raw amino-acid sequence, 216 residues long: Pyridoxine/pyridoxamine 5'-phosphate oxidase (216 aa).

Residues 65–70 (RMVLLK), 80–81 (YT), arginine 86, lysine 87, and glutamine 109 each bind FMN. Residue lysine 70 participates in substrate binding. Substrate-binding residues include tyrosine 127, arginine 131, and serine 135. Residues 144-145 (QS) and tryptophan 189 contribute to the FMN site. A substrate-binding site is contributed by 195–197 (RLH). Position 199 (arginine 199) interacts with FMN.

The protein belongs to the pyridoxamine 5'-phosphate oxidase family. As to quaternary structure, homodimer. FMN serves as cofactor.

The enzyme catalyses pyridoxamine 5'-phosphate + O2 + H2O = pyridoxal 5'-phosphate + H2O2 + NH4(+). It carries out the reaction pyridoxine 5'-phosphate + O2 = pyridoxal 5'-phosphate + H2O2. The protein operates within cofactor metabolism; pyridoxal 5'-phosphate salvage; pyridoxal 5'-phosphate from pyridoxamine 5'-phosphate: step 1/1. It participates in cofactor metabolism; pyridoxal 5'-phosphate salvage; pyridoxal 5'-phosphate from pyridoxine 5'-phosphate: step 1/1. Catalyzes the oxidation of either pyridoxine 5'-phosphate (PNP) or pyridoxamine 5'-phosphate (PMP) into pyridoxal 5'-phosphate (PLP). This Sphingopyxis alaskensis (strain DSM 13593 / LMG 18877 / RB2256) (Sphingomonas alaskensis) protein is Pyridoxine/pyridoxamine 5'-phosphate oxidase.